A 1398-amino-acid polypeptide reads, in one-letter code: Disease resistance protein RPV1 (1398 aa).

Residues 22 to 185 (TTYDVFLSFR…EITNSIFRQL (164 aa)) enclose the TIR domain. Residues 31-36 (RGEDTR) and glycine 63 contribute to the NAD(+) site. Glutamate 97 is an active-site residue. The region spanning 201-440 (SHVKEMILRL…KRSYDGLDRI (240 aa)) is the NB-ARC domain. LRR repeat units lie at residues 203–225 (VKEMILRLHLESSDVRMVGIYGV), 423–447 (KADIHKVLKRSYDGLDRIDKNIFLD), 478–504 (LNDLCLITLPYNQICMHDLIQQMGWEI), 535–560 (IKSVETMSLDLSKLKRVCSNSNVFAK), 610–632 (SYELRYLRWDGYPLDSLPLNFDG), 633–657 (GKLVELHLKCSNIKQLWQGHKDLER), 678–702 (MPNLERLCLSGCVSLIDIHPSVGNM), 703–726 (KKLTTLSLRSCNKLKNLPDSIGDL), 728–750 (SLESLYLSNCSKFEKFPEKGGNM), 751–773 (KSLTELDLKNTAIKDLPDSIGDL), 775–797 (SLESLYLSNCSKFEKFPEKGGNM), 798–820 (KSLTELDLKNTAIKDLPDSIGDL), 822–844 (SLEILNLSDCAKFEKFPEKGGNM), 845–867 (KSLKELDLQNTAIKDLPDSIGDL), 869–891 (SLKYLSLSDCSKFEKFPEKGGNM), 892–914 (KRLLQLILSNTAIKDLPDSIGDL), 916–938 (SLKYLYLSDCSKFEKFPEKGGNM), 939–961 (KSLTELDLKNTAIKDLPDSIGDL), 963–985 (SLEILNLSDCAKFEKFPEKGGNM), 986–1008 (KSLKELDLQNTAIKDLPDSIGDL), 1010–1032 (SLKYLYLSDCSKFEKFPEKGGNM), 1033–1055 (KSLLQLILSNTAIKDLPDSIGDL), 1079–1102 (MKSLRELGLRNTAIKDLPDSIGDL), and 1105–1128 (LEMLSLSNCPKFEVLPLSLKAIDA). Polar residues predominate over residues 1315-1328 (QNSGDNGSALQDAN). Residues 1315 to 1336 (QNSGDNGSALQDANGNVHGANQ) form a disordered region. An LRR 25 repeat occupies 1346 to 1369 (LDLLRNLSLGDNGSVVLEDTLGNR). The short motif at 1369 to 1373 (RKRRR) is the Nuclear localization signal element.

This sequence belongs to the disease resistance TIR-NB-LRR family. Homodimer; homodimerization is required for NAD(+) hydrolase (NADase) activity.

It is found in the nucleus. The protein localises to the cytoplasm. The enzyme catalyses NAD(+) + H2O = ADP-D-ribose + nicotinamide + H(+). Disease resistance (R) protein that confers resistance to multiple powdery and downy mildew by promoting cell death. Acts as a NAD(+) hydrolase (NADase): in response to activation, catalyzes cleavage of NAD(+) into ADP-D-ribose (ADPR) and nicotinamide; NAD(+) cleavage triggering a defense system that promotes cell death. The chain is Disease resistance protein RPV1 from Vitis rotundifolia (Muscadine grape).